The primary structure comprises 397 residues: Lysophospholipid transporter LplT (397 aa).

Residues 1 to 17 lie on the Periplasmic side of the membrane; sequence MSESVHTNTSLWSKGMK. Residues 18–38 traverse the membrane as a helical segment; the sequence is AVIVAQFLSAFGDNALLFATL. At 39-52 the chain is on the cytoplasmic side; that stretch reads ALLKAQFYPEWSQP. Residues 53–73 form a helical membrane-spanning segment; the sequence is ILQMVFVGAYILFAPFVGQVA. Residues 74-90 lie on the Periplasmic side of the membrane; the sequence is DSFAKGRVMMFANGLKL. The helical transmembrane segment at 91-111 threads the bilayer; the sequence is LGAASICFGINPFLGYTLVGV. At 112 to 144 the chain is on the cytoplasmic side; the sequence is GAAAYSPAKYGILGELTTGSKLVKANGLMEAST. The helical transmembrane segment at 145 to 165 threads the bilayer; sequence IAAILLGSVAGGVLADWHVLV. Residue Ala-166 is a topological domain, periplasmic. The helical transmembrane segment at 167-187 threads the bilayer; sequence LAACALAYGGAVVANIYIPKL. The Cytoplasmic segment spans residues 188 to 226; sequence AAARPGQSWNLINMTRSFLNACTSLWRNGETRFSLVGTS. A helical membrane pass occupies residues 227 to 247; sequence LFWGAGVTLRFLLVLWVPVAL. Topologically, residues 248-256 are periplasmic; sequence GITDNATPT. A helical membrane pass occupies residues 257 to 277; sequence YLNAMVAIGIVVGAGAAAKLV. At 278–280 the chain is on the cytoplasmic side; that stretch reads TLE. The helical transmembrane segment at 281–301 threads the bilayer; it reads TMSRCMPAGILIGVVVLIFSL. Over 302-304 the chain is Periplasmic; sequence QHE. The helical transmembrane segment at 305–325 threads the bilayer; that stretch reads LLPAYALLMLIGVMGGFFVVP. Residues 326-343 are Cytoplasmic-facing; the sequence is LNALLQERGKKSVGAGNA. A helical transmembrane segment spans residues 344–364; sequence IAVQNLGENSAMLLMLGIYSL. Over 365–366 the chain is Periplasmic; it reads AV. Residues 367–387 traverse the membrane as a helical segment; sequence MVGIPVVPIGIGFGALFALAI. Residues 388 to 397 lie on the Cytoplasmic side of the membrane; that stretch reads TALWIWQRRH.

The protein belongs to the major facilitator superfamily. LplT (TC 2.A.1.42) family.

It is found in the cell inner membrane. Its function is as follows. Catalyzes the facilitated diffusion of 2-acyl-glycero-3-phosphoethanolamine (2-acyl-GPE) into the cell. The chain is Lysophospholipid transporter LplT from Shigella sonnei (strain Ss046).